The sequence spans 74 residues: Neuropeptide-like protein 33 (74 aa).

Residues 1–21 (MISTSLLLVVLLFAILAIVDA) form the signal peptide. Tyr72 carries the post-translational modification Tyrosine amide.

It belongs to the YARP (YGGW-amide related peptide) family. Expressed in hypoderm.

It is found in the secreted. In terms of biological role, may have antifungic activity against D.coniospora. The protein is Neuropeptide-like protein 33 (nlp-33) of Caenorhabditis elegans.